We begin with the raw amino-acid sequence, 93 residues long: Parbolysin P1 (93 aa).

3 disulfides stabilise this stretch: Cys-16-Cys-37, Cys-22-Cys-33, and Cys-47-Cys-60.

It belongs to the worm cytolysin family. As to expression, localized within the skin and proboscis and are most readily isolated from body mucus secretions.

The protein resides in the secreted. Its function is as follows. Cytolysin that shows hemolytic activity (on bovine erythrocytes, HC(50)=5.75 mg/ml). This hemolytic activity is completely inhibited by small unilamelar vesicles composed of PC/PG, PC/PI and PC/PS in 1:1 molar ratios (with at least 100 mg/ml concentration). The recombinant protein does not show hemolytic activity, suggesting that it is not properly folded or that it requires a free N-terminal end for its activity. This Parborlasia corrugatus (Antarctic nemertean worm) protein is Parbolysin P1.